The sequence spans 346 residues: tRNA N6-adenosine threonylcarbamoyltransferase (346 aa).

Fe cation contacts are provided by His-111 and His-115. Substrate is bound by residues 134-138, Asp-167, Gly-180, and Asn-279; that span reads LVSGG. Fe cation is bound at residue Asp-307.

The protein belongs to the KAE1 / TsaD family. Fe(2+) serves as cofactor.

The protein localises to the cytoplasm. It catalyses the reaction L-threonylcarbamoyladenylate + adenosine(37) in tRNA = N(6)-L-threonylcarbamoyladenosine(37) in tRNA + AMP + H(+). Functionally, required for the formation of a threonylcarbamoyl group on adenosine at position 37 (t(6)A37) in tRNAs that read codons beginning with adenine. Is involved in the transfer of the threonylcarbamoyl moiety of threonylcarbamoyl-AMP (TC-AMP) to the N6 group of A37, together with TsaE and TsaB. TsaD likely plays a direct catalytic role in this reaction. This is tRNA N6-adenosine threonylcarbamoyltransferase from Burkholderia vietnamiensis (strain G4 / LMG 22486) (Burkholderia cepacia (strain R1808)).